Consider the following 317-residue polypeptide: Tyrosine--tRNA ligase (317 aa).

Tyr33 is an L-tyrosine binding site. The 'HIGH' region motif lies at Pro38–His46. Residues Tyr155, Gln159, Asp162, and Gln177 each contribute to the L-tyrosine site. The short motif at Lys211 to Ser215 is the 'KMSKS' region element. Ser214 serves as a coordination point for ATP.

This sequence belongs to the class-I aminoacyl-tRNA synthetase family. TyrS type 3 subfamily. In terms of assembly, homodimer.

The protein localises to the cytoplasm. It carries out the reaction tRNA(Tyr) + L-tyrosine + ATP = L-tyrosyl-tRNA(Tyr) + AMP + diphosphate + H(+). Functionally, catalyzes the attachment of tyrosine to tRNA(Tyr) in a two-step reaction: tyrosine is first activated by ATP to form Tyr-AMP and then transferred to the acceptor end of tRNA(Tyr). This Methanosarcina barkeri (strain Fusaro / DSM 804) protein is Tyrosine--tRNA ligase.